Here is a 417-residue protein sequence, read N- to C-terminus: MTNQNPPVLLEQNHAKQAFVGLQMLFVAFGALVLVPLITGLNANTALLTAGIGTLLFQLCTGRQVPIFLASSFAFIAPIQYGVTTWGIATTMGGLVFTGLVYFALSTLVKIKGAGALQKVFPPVVVGPVIIIIGMGLAPVAVDMALGKNSTYQYNDAVFVSMATLLTTLGVAVFAKGMMKLIPIMFGIVVGYILCLFLGLINFQPVIDAPWFSVPEITTPEFKLEAILYLLPIAIAPAVEHVGGIMAISSVTGKDFLQKPGLHRTLLGDGIATSAASFLGGPPNTTYAEVTGAVMLTRNFNPKIMTWAAVWAIAISFCGKVGAFLSTIPTIVMGGIMMLVFGSIAVVGMSTLIRGKVDVTEARNLCIISVVMTFGIGGMFVNFGEVSLKGISLCAVVAILLNLILPKAKNTPIEENR.

Over 1-13 (MTNQNPPVLLEQN) the chain is Cytoplasmic. A helical membrane pass occupies residues 14 to 37 (HAKQAFVGLQMLFVAFGALVLVPL). Residues 38-41 (ITGL) are Periplasmic-facing. A helical membrane pass occupies residues 42–61 (NANTALLTAGIGTLLFQLCT). At 62 to 64 (GRQ) the chain is on the cytoplasmic side. Residues 65–81 (VPIFLASSFAFIAPIQY) form a discontinuously helical membrane-spanning segment. Phenylalanine 73 provides a ligand contact to uracil. Topologically, residues 83–90 (VTTWGIAT) are periplasmic. The helical transmembrane segment at 91–111 (TMGGLVFTGLVYFALSTLVKI) threads the bilayer. Over 112–123 (KGAGALQKVFPP) the chain is Cytoplasmic. The helical transmembrane segment at 124-145 (VVVGPVIIIIGMGLAPVAVDMA) threads the bilayer. At 146 to 154 (LGKNSTYQY) the chain is on the periplasmic side. The chain crosses the membrane as a helical span at residues 155 to 170 (NDAVFVSMATLLTTLG). The Cytoplasmic segment spans residues 171–177 (VAVFAKG). Residues 178-198 (MMKLIPIMFGIVVGYILCLFL) form a helical membrane-spanning segment. The Periplasmic portion of the chain corresponds to 199-223 (GLINFQPVIDAPWFSVPEITTPEFK). A helical membrane pass occupies residues 224 to 247 (LEAILYLLPIAIAPAVEHVGGIMA). Uracil is bound at residue glutamate 240. The Cytoplasmic portion of the chain corresponds to 248–260 (ISSVTGKDFLQKP). The helical transmembrane segment at 261 to 280 (GLHRTLLGDGIATSAASFLG) threads the bilayer. Residues 281 to 297 (GPPNTTYAEVTGAVMLT) traverse the membrane as a discontinuously helical segment. Glutamate 289 lines the uracil pocket. Topologically, residues 298–300 (RNF) are cytoplasmic. Residues 301-318 (NPKIMTWAAVWAIAISFC) traverse the membrane as a helical segment. At 319–331 (GKVGAFLSTIPTI) the chain is on the periplasmic side. Residues 332–353 (VMGGIMMLVFGSIAVVGMSTLI) form a helical membrane-spanning segment. Residues 354–364 (RGKVDVTEARN) are Cytoplasmic-facing. The discontinuously helical intramembrane region spans 365-400 (LCIISVVMTFGIGGMFVNFGEVSLKGISLCAVVAIL). Over 401 to 416 (LNLILPKAKNTPIEEN) the chain is Cytoplasmic.

Belongs to the nucleobase:cation symporter-2 (NCS2) (TC 2.A.40) family.

Its subcellular location is the cell inner membrane. It catalyses the reaction uracil(in) + H(+)(in) = uracil(out) + H(+)(out). In terms of biological role, transport of uracil in the cell. The sequence is that of Probable uracil permease (uraA) from Pasteurella multocida (strain Pm70).